The chain runs to 295 residues: Tyrosine recombinase XerC (295 aa).

The Core-binding (CB) domain occupies 1 to 85 (MQTYLQKYWN…ALRQFLAFLV (85 aa)). Positions 106–285 (HLPKNINAEQ…NFQHLAEVYD (180 aa)) constitute a Tyr recombinase domain. Residues Arg145, Lys169, His237, Arg240, and His263 contribute to the active site. Tyr272 serves as the catalytic O-(3'-phospho-DNA)-tyrosine intermediate.

The protein belongs to the 'phage' integrase family. XerC subfamily. In terms of assembly, forms a cyclic heterotetrameric complex composed of two molecules of XerC and two molecules of XerD.

The protein resides in the cytoplasm. Site-specific tyrosine recombinase, which acts by catalyzing the cutting and rejoining of the recombining DNA molecules. The XerC-XerD complex is essential to convert dimers of the bacterial chromosome into monomers to permit their segregation at cell division. It also contributes to the segregational stability of plasmids. The polypeptide is Tyrosine recombinase XerC (Mannheimia succiniciproducens (strain KCTC 0769BP / MBEL55E)).